The sequence spans 367 residues: MSLADSVLAINNDLPIRTDSPVHSGKVRSVYWLTDADSRRLITTKGYNVPEDTPLAIMVISDRISAFDCIFHGEGGLKGIPGKGAALNAISNHWFKLFAENGLADSHILDIPHPFVWIVQKARPIKVEAICRQYITGSMWRAYSKGERVFCGITLPEGLEKDQKLPELLITPSTKGILTGIPGVPAQDDVNISRSDIEANYQAFGFEQLADIDLYEKLLKDGFKVISAALAKLDQVFVDTKFEFGYVTDKDGNSKLIYMDEVGTPDSSRIWDGAAYRDGKILENSKEGFRQFLLNHFPDPDVLLNKDRMPEREALARDNDLPLEAMMQVSRTYTGVAEKVTGAPIPLPANPKADIIKILREEYDLIV.

The protein belongs to the SAICAR synthetase family.

It carries out the reaction 5-amino-1-(5-phospho-D-ribosyl)imidazole-4-carboxylate + L-aspartate + ATP = (2S)-2-[5-amino-1-(5-phospho-beta-D-ribosyl)imidazole-4-carboxamido]succinate + ADP + phosphate + 2 H(+). The protein operates within purine metabolism; IMP biosynthesis via de novo pathway; 5-amino-1-(5-phospho-D-ribosyl)imidazole-4-carboxamide from 5-amino-1-(5-phospho-D-ribosyl)imidazole-4-carboxylate: step 1/2. In Shewanella baltica (strain OS195), this protein is Phosphoribosylaminoimidazole-succinocarboxamide synthase.